The sequence spans 289 residues: ATP synthase gamma chain (289 aa).

The protein belongs to the ATPase gamma chain family. As to quaternary structure, F-type ATPases have 2 components, CF(1) - the catalytic core - and CF(0) - the membrane proton channel. CF(1) has five subunits: alpha(3), beta(3), gamma(1), delta(1), epsilon(1). CF(0) has three main subunits: a, b and c.

Its subcellular location is the cell membrane. Produces ATP from ADP in the presence of a proton gradient across the membrane. The gamma chain is believed to be important in regulating ATPase activity and the flow of protons through the CF(0) complex. The protein is ATP synthase gamma chain of Mycoplasmoides gallisepticum (strain R(low / passage 15 / clone 2)) (Mycoplasma gallisepticum).